A 133-amino-acid polypeptide reads, in one-letter code: ATP synthase epsilon chain, chloroplastic (133 aa).

This sequence belongs to the ATPase epsilon chain family. F-type ATPases have 2 components, CF(1) - the catalytic core - and CF(0) - the membrane proton channel. CF(1) has five subunits: alpha(3), beta(3), gamma(1), delta(1), epsilon(1). CF(0) has three main subunits: a, b and c.

It is found in the plastid. The protein localises to the chloroplast thylakoid membrane. Its function is as follows. Produces ATP from ADP in the presence of a proton gradient across the membrane. This chain is ATP synthase epsilon chain, chloroplastic, found in Lactuca sativa (Garden lettuce).